A 125-amino-acid chain; its full sequence is Histone H2B (125 aa).

The segment at 1-32 is disordered; sequence MAPKVRAAKKGEKRVGKAKSGTAETAKRRRGK. An O-linked (GlcNAc) serine glycan is attached at Ser-112. Lys-120 participates in a covalent cross-link: Glycyl lysine isopeptide (Lys-Gly) (interchain with G-Cter in ubiquitin).

Belongs to the histone H2B family. In terms of assembly, the nucleosome is a histone octamer containing two molecules each of H2A, H2B, H3 and H4 assembled in one H3-H4 heterotetramer and two H2A-H2B heterodimers. The octamer wraps approximately 147 bp of DNA. Monoubiquitination of Lys-120 gives a specific tag for epigenetic transcriptional activation and is also prerequisite for histone H3 'Lys-4' and 'Lys-79' methylation. In terms of processing, glcNAcylation at Ser-112 promotes monoubiquitination of Lys-120. It fluctuates in response to extracellular glucose, and associates with transcribed genes.

The protein resides in the nucleus. The protein localises to the chromosome. In terms of biological role, core component of nucleosome. Nucleosomes wrap and compact DNA into chromatin, limiting DNA accessibility to the cellular machineries which require DNA as a template. Histones thereby play a central role in transcription regulation, DNA repair, DNA replication and chromosomal stability. DNA accessibility is regulated via a complex set of post-translational modifications of histones, also called histone code, and nucleosome remodeling. This chain is Histone H2B, found in Acropora formosa (Staghorn coral).